The following is a 216-amino-acid chain: DegV domain-containing protein UU190 (216 aa).

The region spanning 1–215 (MLWKNLDELF…LNNFAILIEA (215 aa)) is the DegV domain. Ser26 contacts hexadecanoate.

Its function is as follows. May bind long-chain fatty acids, such as palmitate, and may play a role in lipid transport or fatty acid metabolism. The sequence is that of DegV domain-containing protein UU190 from Ureaplasma parvum serovar 3 (strain ATCC 700970).